The primary structure comprises 130 residues: Odontogenesis associated phosphoprotein (130 aa).

Positions 1–23 are cleaved as a signal peptide; that stretch reads MARRHCFSYWLLVCWLVVTVAEG.

Highly expressed in placenta.

It is found in the secreted. May promote nucleation of hydroxyapatite. This is Odontogenesis associated phosphoprotein from Homo sapiens (Human).